The following is a 607-amino-acid chain: UvrABC system protein C (607 aa).

Residues 16-94 enclose the GIY-YIG domain; sequence GRPGVYRMFD…IKEWRPPYNI (79 aa). A UVR domain is found at 203–238; that stretch reads NALTDELSTAMEAAASTLDFEKAAELRDQISLLRRV.

Belongs to the UvrC family. In terms of assembly, interacts with UvrB in an incision complex.

The protein resides in the cytoplasm. Its function is as follows. The UvrABC repair system catalyzes the recognition and processing of DNA lesions. UvrC both incises the 5' and 3' sides of the lesion. The N-terminal half is responsible for the 3' incision and the C-terminal half is responsible for the 5' incision. The protein is UvrABC system protein C of Pseudomonas fluorescens (strain ATCC BAA-477 / NRRL B-23932 / Pf-5).